Reading from the N-terminus, the 208-residue chain is Small ribosomal subunit protein uS4 (208 aa).

An S4 RNA-binding domain is found at 98–163 (RRLDNVVYRL…KPRFIEIKEK (66 aa)).

Belongs to the universal ribosomal protein uS4 family. In terms of assembly, part of the 30S ribosomal subunit. Contacts protein S5. The interaction surface between S4 and S5 is involved in control of translational fidelity.

Its function is as follows. One of the primary rRNA binding proteins, it binds directly to 16S rRNA where it nucleates assembly of the body of the 30S subunit. In terms of biological role, with S5 and S12 plays an important role in translational accuracy. The sequence is that of Small ribosomal subunit protein uS4 from Caldicellulosiruptor saccharolyticus (strain ATCC 43494 / DSM 8903 / Tp8T 6331).